Reading from the N-terminus, the 351-residue chain is MRQQELIQKLLAGADLSAQEMEACIDSIMENRFTDAGTGAILALLQKKGVTPTEAIGAYENLMTRVTPITLPAHAVDTCGTGGDHRGTFNISTAAAFIAAGAGVPIAKHGNRSITSKCGSADVLEALGYRVDLPASATEEQFRETGFAFLFAPLYHPSMKAVASIRRELGIRTLFNLLGPLINPAKVKRQFIGVFDPSVMELYADVLIHAGCQHAMIVHGKTEHGDGLDEASVSGPTTIIELFEGRLCHHTVNPEDFGLNRWSIDELAGGDAETNAQIIRQILDGSATQAQIDAALFASAITCYVSGMGSCIDEGMSMSKESLESLAAMENMNRIIEVNNRLAEECNTHEG.

5-phospho-alpha-D-ribose 1-diphosphate contacts are provided by residues Gly80, 83-84 (GD), Thr88, 90-93 (NIST), 108-116 (KHGNRSITS), and Ser120. Gly80 lines the anthranilate pocket. Ser92 is a binding site for Mg(2+). Residue Asn111 participates in anthranilate binding. Anthranilate is bound at residue Arg166. Residues Asp229 and Glu230 each contribute to the Mg(2+) site.

The protein belongs to the anthranilate phosphoribosyltransferase family. In terms of assembly, homodimer. Mg(2+) serves as cofactor.

The catalysed reaction is N-(5-phospho-beta-D-ribosyl)anthranilate + diphosphate = 5-phospho-alpha-D-ribose 1-diphosphate + anthranilate. The protein operates within amino-acid biosynthesis; L-tryptophan biosynthesis; L-tryptophan from chorismate: step 2/5. In terms of biological role, catalyzes the transfer of the phosphoribosyl group of 5-phosphorylribose-1-pyrophosphate (PRPP) to anthranilate to yield N-(5'-phosphoribosyl)-anthranilate (PRA). This is Anthranilate phosphoribosyltransferase from Chlorobaculum parvum (strain DSM 263 / NCIMB 8327) (Chlorobium vibrioforme subsp. thiosulfatophilum).